The following is a 309-amino-acid chain: MAVNQSHTENRRGALIPNGESLLKRSPNVELSFPQRSEGSNVFSGRKTGTLFLTSYRVIFITSCSISDPMLSFMMPFDLMTNLTVEQPVFAANFIKGTIQAAPYGGWEGQATFKLVFRNGDAIEFAQLMVKAASAAARGFPLRTLNDWFSSMGIYVITGEGNMCTPQMPCSVIVYGAPPAGYGAPPPGYGAPPAGYGAQPVGNEGPPVGYRASPVRYGAPPLGYGAPPAGYGAPPLGYGAPPLGYGTPPLGYGAPPLGYGAPPAGNEGPPAGYRASPAGSGARPQESTAAQAPENEASLPSASSSQVHS.

One can recognise a GRAM domain in the interval 45–87 (GRKTGTLFLTSYRVIFITSCSISDPMLSFMMPFDLMTNLTVEQ). 10 consecutive repeat copies span residues 175 to 181 (YGAPPAG), 182 to 188 (YGAPPPG), 189 to 195 (YGAPPAG), 217 to 223 (YGAPPLG), 224 to 230 (YGAPPAG), 231 to 237 (YGAPPLG), 238 to 244 (YGAPPLG), 245 to 251 (YGTPPLG), 252 to 258 (YGAPPLG), and 259 to 265 (YGAPPAG). The 10 X 7 AA tandem repeat of Y-G-X-P-P-X-G stretch occupies residues 175–265 (YGAPPAGYGA…PLGYGAPPAG (91 aa)). A PPxY motif motif is present at residues 186-189 (PPGY). Over residues 251–272 (GYGAPPLGYGAPPAGNEGPPAG) the composition is skewed to low complexity. A disordered region spans residues 251–309 (GYGAPPLGYGAPPAGNEGPPAGYRASPAGSGARPQESTAAQAPENEASLPSASSSQVHS). A compositionally biased stretch (polar residues) spans 298–309 (SLPSASSSQVHS).

Expressed in testis.

May play a role in meiotic resumption and pronuclear formation, mediated by a WW domain-signaling pathway during fertilization. This is Postacrosomal sheath WW domain-binding protein (WBP2NL) from Homo sapiens (Human).